A 205-amino-acid polypeptide reads, in one-letter code: MFESRPDRDAEVVLIGRSNVGKSTLMREITGHTFDTGQRPGVTRSPNHFDWASADFVISDLPGFGFMKGVPEDVREEIKTDVVQYVERNAEHILVGILVVDGKSVIDIIDRHSGPDEIPHDVEMFHFLREVGVEPVVAVNKMDKVDDKDARLNELCDRLGLHPPWQQWQETIAPISAKHGSTEPLNEAVRHHLHEVQRDDLFQFF.

The 188-residue stretch at Arg-8–Glu-195 folds into the EngB-type G domain. Residues Gly-16 to Ser-23, Gly-41 to Ser-45, Asp-60 to Gly-63, Asn-140 to Asp-143, and Ile-175 to Ala-177 each bind GTP. 2 residues coordinate Mg(2+): Ser-23 and Thr-43.

Belongs to the TRAFAC class TrmE-Era-EngA-EngB-Septin-like GTPase superfamily. EngB GTPase family. It depends on Mg(2+) as a cofactor.

Its function is as follows. Necessary for normal cell division and for the maintenance of normal septation. This Haloarcula marismortui (strain ATCC 43049 / DSM 3752 / JCM 8966 / VKM B-1809) (Halobacterium marismortui) protein is Probable GTP-binding protein EngB.